Consider the following 346-residue polypeptide: Probable RNA methyltransferase Pmen_2155 (346 aa).

The active-site Proton acceptor is the glutamate 91. Residues 94 to 320 (LLPRDGLCIS…TKVRNSAGQD (227 aa)) form the Radical SAM core domain. The cysteines at positions 101 and 325 are disulfide-linked. [4Fe-4S] cluster-binding residues include cysteine 108, cysteine 112, and cysteine 115. Residues 153-154 (GE), serine 183, 206-208 (SLH), and asparagine 282 each bind S-adenosyl-L-methionine. The S-methylcysteine intermediate role is filled by cysteine 325.

The protein belongs to the radical SAM superfamily. RlmN family. It depends on [4Fe-4S] cluster as a cofactor.

Its subcellular location is the cytoplasm. The protein is Probable RNA methyltransferase Pmen_2155 of Ectopseudomonas mendocina (strain ymp) (Pseudomonas mendocina).